The following is a 255-amino-acid chain: Type III pantothenate kinase (255 aa).

6 to 13 (DIGNTNTV) provides a ligand contact to ATP. Residues Tyr100 and 107-110 (GADR) each bind substrate. Asp109 functions as the Proton acceptor in the catalytic mechanism. Asp129 contributes to the K(+) binding site. An ATP-binding site is contributed by Thr132. Residue Thr185 coordinates substrate.

Belongs to the type III pantothenate kinase family. Homodimer. Requires NH4(+) as cofactor. K(+) is required as a cofactor.

The protein localises to the cytoplasm. The catalysed reaction is (R)-pantothenate + ATP = (R)-4'-phosphopantothenate + ADP + H(+). Its pathway is cofactor biosynthesis; coenzyme A biosynthesis; CoA from (R)-pantothenate: step 1/5. Its function is as follows. Catalyzes the phosphorylation of pantothenate (Pan), the first step in CoA biosynthesis. This chain is Type III pantothenate kinase, found in Desulfosudis oleivorans (strain DSM 6200 / JCM 39069 / Hxd3) (Desulfococcus oleovorans).